The chain runs to 136 residues: Nucleoside diphosphate kinase (136 aa).

ATP is bound by residues lysine 10, phenylalanine 58, arginine 86, threonine 92, arginine 104, and asparagine 114. Catalysis depends on histidine 117, which acts as the Pros-phosphohistidine intermediate.

It belongs to the NDK family. In terms of assembly, homotetramer. Mg(2+) serves as cofactor.

The protein resides in the cytoplasm. The enzyme catalyses a 2'-deoxyribonucleoside 5'-diphosphate + ATP = a 2'-deoxyribonucleoside 5'-triphosphate + ADP. It catalyses the reaction a ribonucleoside 5'-diphosphate + ATP = a ribonucleoside 5'-triphosphate + ADP. Its function is as follows. Major role in the synthesis of nucleoside triphosphates other than ATP. The ATP gamma phosphate is transferred to the NDP beta phosphate via a ping-pong mechanism, using a phosphorylated active-site intermediate. The chain is Nucleoside diphosphate kinase from Mycobacterium ulcerans (strain Agy99).